Here is a 621-residue protein sequence, read N- to C-terminus: Autonomous transposable element EN-1 mosaic protein (621 aa).

Disordered regions lie at residues Met-1–Arg-119, Tyr-428–Arg-447, Gln-498–Gln-530, and Arg-549–Glu-621. Polar residues-rich tracts occupy residues Glu-27–Leu-39 and Arg-47–Arg-61. The span at Ala-82–Ser-102 shows a compositional bias: acidic residues. Residues Pro-570–Ala-594 are compositionally biased toward low complexity.

Functionally, this protein has most probably three functions; the mutator (M) function, for excision and transposition; the suppressor (S) function, which inhibits residual gene activity of certain alleles in which inhibitor elements are integrated; an activator (A) function is proposed, because inactive SPM can be activated by a second SPM. In Zea mays (Maize), this protein is Autonomous transposable element EN-1 mosaic protein.